Reading from the N-terminus, the 294-residue chain is Ribosomal protein L11 methyltransferase (294 aa).

S-adenosyl-L-methionine is bound by residues Thr144, Gly165, Asp187, and Asn229.

It belongs to the methyltransferase superfamily. PrmA family.

The protein localises to the cytoplasm. The enzyme catalyses L-lysyl-[protein] + 3 S-adenosyl-L-methionine = N(6),N(6),N(6)-trimethyl-L-lysyl-[protein] + 3 S-adenosyl-L-homocysteine + 3 H(+). In terms of biological role, methylates ribosomal protein L11. In Pseudomonas paraeruginosa (strain DSM 24068 / PA7) (Pseudomonas aeruginosa (strain PA7)), this protein is Ribosomal protein L11 methyltransferase.